A 307-amino-acid polypeptide reads, in one-letter code: Olfactory receptor 5M3 (307 aa).

Topologically, residues 1–23 (MLNFTDVTEFILLGLTSRREWQV) are extracellular. Asn-3 carries N-linked (GlcNAc...) asparagine glycosylation. Residues 24–44 (LFFIIFLVVYIITMVGNIGMM) traverse the membrane as a helical segment. Topologically, residues 45–52 (VLIKVSPQ) are cytoplasmic. Residues 53-73 (LNNPMYFFLSHLSFVDVWFSS) traverse the membrane as a helical segment. Topologically, residues 74 to 97 (NVTPKMLENLLSDKKTITYAGCLV) are extracellular. Cysteines 95 and 187 form a disulfide. The chain crosses the membrane as a helical span at residues 98–118 (QCFFFIALVHVEIFILAAMAF). Topologically, residues 119–137 (DRYMAIGNPLLYGSKMSRV) are cytoplasmic. Residues 138–158 (VCIRLITFPYIYGFLTSLAAT) form a helical membrane-spanning segment. Residues 159 to 194 (LWTYGLYFCGKIEINHFYCADPPLIKMACAGTFVKE) lie on the Extracellular side of the membrane. Residues 195–215 (YTMIILAGINFTYSLTVIIIS) form a helical membrane-spanning segment. At 216–235 (YLFILIAILRMRSAEGRQKA) the chain is on the cytoplasmic side. Residues 236 to 256 (FSTCGSHLTAVIIFYGTLIFM) form a helical membrane-spanning segment. Topologically, residues 257 to 269 (YLRRPTEESVEQG) are extracellular. A helical transmembrane segment spans residues 270–290 (KMVAVFYTTVIPMLNPMIYSL). The Cytoplasmic segment spans residues 291–307 (RNKDVKKAMMKVISRSC).

This sequence belongs to the G-protein coupled receptor 1 family.

It localises to the cell membrane. Functionally, odorant receptor. The sequence is that of Olfactory receptor 5M3 (OR5M3) from Homo sapiens (Human).